The chain runs to 195 residues: Myosin regulatory light chain, striated muscle, 25 kDa isoform (195 aa).

Positions 1–17 are enriched in basic and acidic residues; sequence AKDKEKKEKKDKKKDDA. The tract at residues 1-39 is disordered; that stretch reads AKDKEKKEKKDKKKDDAPAEEAPAAAAAPAEEAAPTPSA. Positions 20 to 39 are enriched in low complexity; sequence EEAPAAAAAPAEEAAPTPSA. 2 consecutive EF-hand domains span residues 55–90 and 124–159; these read NQIQ…IGRE and DTEG…VGDQ. Ca(2+) contacts are provided by D68, D70, D72, and D79.

Myosin is a hexamer of 2 heavy chains and 4 light chains.

In terms of biological role, plays an important role in regulation of muscle cell contractile activity. This chain is Myosin regulatory light chain, striated muscle, 25 kDa isoform, found in Lumbricus terrestris (Common earthworm).